The following is a 111-amino-acid chain: Disintegrin DS-AS (111 aa).

An N-terminal signal peptide occupies residues 1–20 (MIQVLLVIICLAVFPYQGSC). Residues 21 to 47 (IILESGNVNDYEIVYPKKLIVLPTGAM) constitute a propeptide that is removed on maturation. Residues 47–111 (MNSPHPCCDP…PDCPRNPYKD (65 aa)) form the Disintegrin domain. Cystine bridges form between Cys-53/Cys-76, Cys-67/Cys-73, Cys-72/Cys-97, and Cys-85/Cys-104. The short motif at 89-91 (RGD) is the Cell attachment site element.

In terms of assembly, heterodimer; disulfide-linked.

The protein localises to the secreted. Inhibits ADP-induced platelet aggregation in human platelet-rich plasma (IC(50) is 8 uM). In Atheris squamigera (Variable bush viper), this protein is Disintegrin DS-AS.